We begin with the raw amino-acid sequence, 275 residues long: Provicilin (275 aa).

Residues 1 to 17 (DNAEIEKILLEEHEKET) show a composition bias toward basic and acidic residues. Disordered regions lie at residues 1-71 (DNAE…LKSS) and 134-164 (LVGQ…KNQV). Positions 50 to 63 (NAKSSSKKSVSSRS) are enriched in low complexity. Positions 66-238 (FNLKSSDPIY…TFPGSAQEVD (173 aa)) constitute a Cupin type-1 domain. The span at 147–157 (EEDDEEEEQRE) shows a compositional bias: acidic residues.

This sequence belongs to the 7S seed storage protein family.

It localises to the vacuole. Its subcellular location is the aleurone grain. Its function is as follows. Seed storage protein. The protein is Provicilin of Pisum sativum (Garden pea).